We begin with the raw amino-acid sequence, 690 residues long: Peroxidase (690 aa).

Residues 1-20 form the signal peptide; it reads MIRARDLLLLALLGFISSAL. A disulfide bond links Cys100 and Cys112. The active-site Proton acceptor is the His185. Asn310 is a glycosylation site (N-linked (GlcNAc...) asparagine). The cysteines at positions 315 and 324 are disulfide-linked. Residue His437 participates in heme b binding. Disulfide bonds link Cys536-Cys592 and Cys636-Cys662.

It belongs to the peroxidase family. XPO subfamily. Heme b serves as cofactor.

It is found in the secreted. The enzyme catalyses 2 a phenolic donor + H2O2 = 2 a phenolic radical donor + 2 H2O. In terms of biological role, involved in the chorion hardening process, through protein cross-linking mediated by the formation of di- and tri-tyrosine bonds. This is Peroxidase (Pxd) from Drosophila melanogaster (Fruit fly).